Reading from the N-terminus, the 476-residue chain is Nyctalopin (476 aa).

An N-terminal signal peptide occupies residues 1 to 18 (MLVLLLHAVVLGLPSAWA). LRR repeat units follow at residues 60–84 (VSIDLDRNGLRFLGERAFGTLPSLR), 85–108 (RLSLRHNNLSFITPGAFKGLPRLA), 110–133 (LRLAHNGDLRYLHARTFAALSRLR), 134–157 (RLDLAACRLFSVPERLLAELPALR), 159–181 (LAAFDNLFRRVPGALRGLANLTH), 182–204 (AHLERGRIEAVASSSLQGLRRLR), 205–228 (SLSLQANRVRAVHAGAFGDCGVLE), 229–252 (HLLLNDNLLAELPADAFRGLRRLR), 254–276 (LNLGGNALDRVARAWFADLAELE), 277–300 (LLYLDRNSIAFVEEGAFQNLSGLL), and 302–324 (LHLNGNRLTVLAWVAFQPGFFLG). N92 is a glycosylation site (N-linked (GlcNAc...) asparagine). An N-linked (GlcNAc...) asparagine glycan is attached at N178. An N-linked (GlcNAc...) asparagine glycan is attached at N295. The LRRCT domain occupies 336–387 (DCRLEWLRDWMEGSGRVTDVPCASPGSVAGLDLSQVTFGRSSDGLCVDPEEL). Residues N388, N427, and N434 are each glycosylated (N-linked (GlcNAc...) asparagine).

The protein belongs to the small leucine-rich proteoglycan (SLRP) family. SLRP class IV subfamily. Expressed in kidney and retina. Also at low levels in brain, testis and muscle. Within the retina, expressed in the inner segment of photoreceptors, outer and inner nuclear layers and the ganglion cell layer.

The protein localises to the secreted. The protein resides in the extracellular space. It localises to the extracellular matrix. The protein is Nyctalopin (NYX) of Homo sapiens (Human).